Here is a 91-residue protein sequence, read N- to C-terminus: uncharacterized protein (91 aa).

3 helical membrane-spanning segments follow: residues 9-29, 44-64, and 71-91; these read VLWGAVIAAFILSIVFYPFLP, LTVNKLAGTVMLPVLMVVFAW, and QFVFAVYILLICHIVVLCLAL.

It localises to the cell membrane. This is an uncharacterized protein from Bacillus subtilis (strain 168).